Here is a 366-residue protein sequence, read N- to C-terminus: MSLINRKLEHVEICLYEDVQGIVSTLLEDVTLIHQAMPRMNFRDVDTRAEFLGKTLSLPLMVTGMTGGHEELGKVNAVIAEVVEELGLAMGVGSQRVAVERPETAESFKVTRRMAPTAPLVANLGLPQVTRGYGVKQFMDAIQMIEANAIAVHLNPAQELFQPEGEPEYPLSALEALRDISKELNVPVIVKESGTGMSMETAKLLADHGFKILDVSGQGGTSWIAVEMVRNRRKGNWKYESSQLFSGWGIPTAASIVETRYSVPDSYIIASGGIRNGLDVAKSISLGANIAGMANPVLHHAVRGKEQLKKFFEEVAFQLRAAMFLTGSRDVKTLRHAPLVISGKLKDWLESRGLTLSVYESIRKGA.

6–7 lines the substrate pocket; the sequence is RK. Residues Thr63, 64 to 66, Ser94, and Asn123 each bind FMN; that span reads GMT. 94 to 96 is a binding site for substrate; sequence SQR. Gln158 contacts substrate. Glu159 serves as a coordination point for Mg(2+). FMN is bound by residues Lys191, Ser216, Thr221, 273-275, and 294-295; these read GIR and AN.

The protein belongs to the IPP isomerase type 2 family. In terms of assembly, homooctamer. Dimer of tetramers. FMN serves as cofactor. It depends on NADPH as a cofactor. Mg(2+) is required as a cofactor.

Its subcellular location is the cytoplasm. The enzyme catalyses isopentenyl diphosphate = dimethylallyl diphosphate. Involved in the biosynthesis of isoprenoids. Catalyzes the 1,3-allylic rearrangement of the homoallylic substrate isopentenyl (IPP) to its allylic isomer, dimethylallyl diphosphate (DMAPP). The polypeptide is Isopentenyl-diphosphate delta-isomerase (Metallosphaera sedula (strain ATCC 51363 / DSM 5348 / JCM 9185 / NBRC 15509 / TH2)).